The chain runs to 562 residues: mRNA cleavage and polyadenylation factor CLP1 (562 aa).

A disordered region spans residues 1–27 (MSLPGLELSQQPIEARRAPPQPTQISL). Residues Glu-32, Lys-71, and 154 to 159 (DAGKTS) contribute to the ATP site. Residues 415–483 (EDEYDPSKFD…STTPFTNLPS (69 aa)) are disordered. The span at 445–479 (SLQPPSGLLPGLRSELPSATTGFPSASTSSTTPFT) shows a compositional bias: low complexity.

The protein belongs to the Clp1 family. Clp1 subfamily. In terms of assembly, component of a pre-mRNA cleavage factor complex. Interacts directly with PCF11.

It is found in the nucleus. Required for endonucleolytic cleavage during polyadenylation-dependent pre-mRNA 3'-end formation. The chain is mRNA cleavage and polyadenylation factor CLP1 from Coccidioides immitis (strain RS) (Valley fever fungus).